The sequence spans 1075 residues: DNA-directed RNA polymerase subunit beta (1075 aa).

The protein belongs to the RNA polymerase beta chain family. As to quaternary structure, in plastids the minimal PEP RNA polymerase catalytic core is composed of four subunits: alpha, beta, beta', and beta''. When a (nuclear-encoded) sigma factor is associated with the core the holoenzyme is formed, which can initiate transcription.

The protein localises to the plastid. Its subcellular location is the chloroplast. It carries out the reaction RNA(n) + a ribonucleoside 5'-triphosphate = RNA(n+1) + diphosphate. Functionally, DNA-dependent RNA polymerase catalyzes the transcription of DNA into RNA using the four ribonucleoside triphosphates as substrates. The sequence is that of DNA-directed RNA polymerase subunit beta from Zea mays (Maize).